A 150-amino-acid polypeptide reads, in one-letter code: Large ribosomal subunit protein bL9 (150 aa).

Belongs to the bacterial ribosomal protein bL9 family.

Binds to the 23S rRNA. This Vibrio campbellii (strain ATCC BAA-1116) protein is Large ribosomal subunit protein bL9.